Reading from the N-terminus, the 156-residue chain is Ribosome maturation factor RimP (156 aa).

It belongs to the RimP family.

The protein localises to the cytoplasm. Functionally, required for maturation of 30S ribosomal subunits. The protein is Ribosome maturation factor RimP of Bacillus mycoides (strain KBAB4) (Bacillus weihenstephanensis).